We begin with the raw amino-acid sequence, 2633 residues long: Non-reducing polyketide synthase sor2 (2633 aa).

An N-terminal acylcarrier protein transacylase domain (SAT) region spans residues 67–237 (VSNAQKLAEW…TTSTRTVAAL (171 aa)). Cysteine 140 serves as the catalytic Nucleophile; for transacylase activity. Histidine 258 serves as the catalytic Proton donor/acceptor; for transacylase activity. Residues 389–814 (ENDIAVIGMA…GSNASVIIKQ (426 aa)) form the Ketosynthase family 3 (KS3) domain. Catalysis depends on for beta-ketoacyl synthase activity residues cysteine 561, histidine 696, and histidine 737. Positions 928–1239 (CFGGQVSTFV…SKASSQLSDV (312 aa)) are malonyl-CoA:ACP transacylase (MAT) domain. The interval 1307–1437 (PQPVGLYTLL…GQLHFQASDD (131 aa)) is N-terminal hotdog fold. The PKS/mFAS DH domain maps to 1307–1627 (PQPVGLYTLL…YAPVSLDQLF (321 aa)). The interval 1338–1509 (MSDHAIGKAQ…SNESAGRLVR (172 aa)) is product template (PT) domain. Residues 1464–1627 (GRSDEVIQGQ…YAPVSLDQLF (164 aa)) form a C-terminal hotdog fold region. A Carrier domain is found at 1684-1758 (EELWLRLRPV…GILKFLQSTL (75 aa)). Serine 1718 is modified (O-(pantetheine 4'-phosphoryl)serine). The tract at residues 1762-1792 (DVHDSSETMSTVSSDGNVHSPPTSGSEMASP) is disordered. Polar residues predominate over residues 1768 to 1790 (ETMSTVSSDGNVHSPPTSGSEMA). Residues 1982-2166 (FELMADFLTR…ASGFKHVRWT (185 aa)) are methyltransferase domain. An NADPH-binding (R) domain region spans residues 2253-2495 (VTGATGSLGS…TLRALPDVDG (243 aa)).

Pantetheine 4'-phosphate is required as a cofactor.

It functions in the pathway secondary metabolite biosynthesis. Functionally, non-reducing polyketide synthase; part of the SOR gene cluster that mediates the biosynthesis of sorbicillinoids, a diverse group of yellow secondary metabolites that restrict growth of competing pathogenic fungi but not of bacteria. Sorbicillinoids biosynthesis requires the action of two PKSs. The SOR cluster is required for the production of trichodimerol and dihydrotrichotetronin, with sor2 being sufficient for production of trichodimerol, but not dihydrotrichotetronin in the light. Sor1 iteratively combines three acetyl units and the growing chain is modified by the ketoacyl reductase subunit, and optional by the enoyl reductase subunit in the second cycle. The polyketide is then handed over to the PKS sor2, which adds three more acetyl units, and two methyl groups. Sor2 releases an aldehyde, which undergoes spontaneous cyclization resulting in the formation of sorbicillin or 2',3'-dihydrosorbicillin. The monooxygenase sor5 oxidizes sorbicillin and 2',3'-dihydrosorbicillin to 2',3'-dihydrosorbicillinol and sorbicillinol, respectively. The oxidoreductase sor8 further converts sorbicillinol into oxosorbicillinol. Sorbicillinol is the building block for the other sorbicillinoids such as disorbicillinol, bisvertinolon, dihydrobisvertinolone, and dihydrotrichotetronine. The sequence is that of Non-reducing polyketide synthase sor2 from Hypocrea jecorina (strain QM6a) (Trichoderma reesei).